We begin with the raw amino-acid sequence, 194 residues long: Mpv17-like protein (194 aa).

Over 1-14 (MASWWRAFPQAARR) the chain is Cytoplasmic. A helical transmembrane segment spans residues 15-34 (YPWPTNVLLYAGLFSAGDAL). The targeting to peroxisomes stretch occupies residues 16–55 (PWPTNVLLYAGLFSAGDALQQRLRGGPADWRQTRRVATLA). Over 35–50 (QQRLRGGPADWRQTRR) the chain is Lumenal. The helical transmembrane segment at 51-67 (VATLAVTFHGNFNYVWL) threads the bilayer. Residues 68-91 (RLLERALPGRAPRTVLAKVLCDQT) are Cytoplasmic-facing. The chain crosses the membrane as a helical span at residues 92–110 (VGGPIALSAFYVGMSVLQG). The Lumenal segment spans residues 111–150 (KDDIFLDLKQKFWNTYKSGLMYWPFVQLTNFSLVPVHWRT). A helical membrane pass occupies residues 151 to 168 (AYTGLCAFLWATFLCFSQ). Residues 169–194 (QSGDGTLQSIFIFLRRKEASDKSPEK) lie on the Cytoplasmic side of the membrane.

The protein belongs to the peroxisomal membrane protein PXMP2/4 family. As to expression, isoform 1 and isoform 3 are expressed in the kidney (at protein level). Isoform 1 is expressed in the kidney, spleen, heart, brain, lung and liver. Isoform 3 is expressed in the kidney. Isoform 1 and isoform 3 expression increase during development, reache their highest level in adulthood and decrease with aging.

It is found in the peroxisome membrane. It localises to the cytoplasm. Participates in reactive oxygen species metabolism by up- or down-regulation of the genes of antioxidant enzymes. Protective against the mitochondrial apoptotic cascade. Its function is as follows. Participates in reactive oxygen species metabolism by up- or down-regulation of the genes of antioxidant enzymes. The chain is Mpv17-like protein (Mpv17l) from Mus musculus (Mouse).